A 359-amino-acid chain; its full sequence is Glyceraldehyde-3-phosphate dehydrogenase, glycosomal (359 aa).

Residues 12–13 (RI), Asp38, Gln91, and Ser134 contribute to the NAD(+) site. Residues 165–167 (SCT), Thr197, 226–227 (TG), and Arg249 contribute to the D-glyceraldehyde 3-phosphate site. Catalysis depends on Cys166, which acts as the Nucleophile. Asn335 is an NAD(+) binding site. The short motif at 357–359 (ARL) is the Microbody targeting signal element.

The protein belongs to the glyceraldehyde-3-phosphate dehydrogenase family. In terms of assembly, homotetramer.

The protein localises to the glycosome. The catalysed reaction is D-glyceraldehyde 3-phosphate + phosphate + NAD(+) = (2R)-3-phospho-glyceroyl phosphate + NADH + H(+). Its pathway is carbohydrate degradation; glycolysis; pyruvate from D-glyceraldehyde 3-phosphate: step 1/5. This chain is Glyceraldehyde-3-phosphate dehydrogenase, glycosomal, found in Trypanosoma cruzi.